A 166-amino-acid polypeptide reads, in one-letter code: MALKTDIRGMVWRYSDYFIVGREQCREFARAIKCDHPAYFSEDAAAELGYDAIVAPLTFVTIFAKYVQLDFFRNVDVGMETMQIVQVDQRFVFHKPVLVGDKLWARMDIHSVSERFGADIVVTKNSCTSDDGELVMEAYTTLMGQQGDNSSQLKWDKESGQVIRSA.

The protein belongs to the UPF0336 family.

This Mycobacterium leprae (strain TN) protein is UPF0336 protein ML1908.